A 956-amino-acid polypeptide reads, in one-letter code: Valine--tRNA ligase (956 aa).

Residues 69 to 79 (PNITGVLHMGH) carry the 'HIGH' region motif. Residues 566 to 570 (KMSKS) carry the 'KMSKS' region motif. Residue Lys-569 coordinates ATP. Residues 885-911 (LCARLQKAWQKARQKVQQVERKLADAQ) adopt a coiled-coil conformation.

The protein belongs to the class-I aminoacyl-tRNA synthetase family. ValS type 1 subfamily. As to quaternary structure, monomer.

It is found in the cytoplasm. The catalysed reaction is tRNA(Val) + L-valine + ATP = L-valyl-tRNA(Val) + AMP + diphosphate. Functionally, catalyzes the attachment of valine to tRNA(Val). As ValRS can inadvertently accommodate and process structurally similar amino acids such as threonine, to avoid such errors, it has a 'posttransfer' editing activity that hydrolyzes mischarged Thr-tRNA(Val) in a tRNA-dependent manner. The sequence is that of Valine--tRNA ligase from Treponema pallidum (strain Nichols).